A 225-amino-acid polypeptide reads, in one-letter code: tRNA (guanine-N(7)-)-methyltransferase (225 aa).

S-adenosyl-L-methionine-binding residues include Glu56, Glu81, Asp108, and Asp131. The active site involves Asp131. Substrate is bound by residues Lys135, Asp167, and Thr204–Glu207.

This sequence belongs to the class I-like SAM-binding methyltransferase superfamily. TrmB family.

The catalysed reaction is guanosine(46) in tRNA + S-adenosyl-L-methionine = N(7)-methylguanosine(46) in tRNA + S-adenosyl-L-homocysteine. The protein operates within tRNA modification; N(7)-methylguanine-tRNA biosynthesis. Its function is as follows. Catalyzes the formation of N(7)-methylguanine at position 46 (m7G46) in tRNA. The protein is tRNA (guanine-N(7)-)-methyltransferase of Legionella pneumophila (strain Lens).